Consider the following 130-residue polypeptide: Small ribosomal subunit protein uS9 (130 aa).

Belongs to the universal ribosomal protein uS9 family.

The polypeptide is Small ribosomal subunit protein uS9 (Shigella dysenteriae serotype 1 (strain Sd197)).